A 655-amino-acid chain; its full sequence is Protein-glucosylgalactosylhydroxylysine glucosidase (655 aa).

Residue 258–259 participates in substrate binding; it reads WD. The active-site Proton donor is the E388. 456–457 contacts substrate; sequence KQ.

It belongs to the glycosyl hydrolase 65 family.

It catalyses the reaction (5R)-5-O-[alpha-D-glucosyl-(1-&gt;2)-beta-D-galactosyl]-5-hydroxy-L-lysyl-[collagen] + H2O = (5R)-5-O-(beta-D-galactosyl)-5-hydroxy-L-lysyl-[collagen] + D-glucose. Catalyzes the hydrolysis of glucose from the disaccharide unit linked to hydroxylysine residues of collagen and collagen-like proteins. The protein is Protein-glucosylgalactosylhydroxylysine glucosidase of Danio rerio (Zebrafish).